The following is a 297-amino-acid chain: N-acetylneuraminate lyase (297 aa).

Aceneuramate is bound by residues serine 47 and threonine 48. Tyrosine 137 (proton donor) is an active-site residue. Lysine 165 acts as the Schiff-base intermediate with substrate in catalysis. Aceneuramate-binding residues include threonine 167, glycine 189, aspartate 191, glutamate 192, and serine 208.

Belongs to the DapA family. NanA subfamily. In terms of assembly, homotetramer.

It localises to the cytoplasm. The catalysed reaction is aceneuramate = aldehydo-N-acetyl-D-mannosamine + pyruvate. Its pathway is amino-sugar metabolism; N-acetylneuraminate degradation; D-fructose 6-phosphate from N-acetylneuraminate: step 1/5. In terms of biological role, catalyzes the reversible aldol cleavage of N-acetylneuraminic acid (sialic acid; Neu5Ac) to form pyruvate and N-acetylmannosamine (ManNAc) via a Schiff base intermediate. The polypeptide is N-acetylneuraminate lyase (Salmonella choleraesuis (strain SC-B67)).